We begin with the raw amino-acid sequence, 300 residues long: Inosose dehydratase (300 aa).

This sequence belongs to the IolE/MocC family. Glutathione serves as cofactor. The cofactor is Co(2+). Requires Mn(2+) as cofactor.

The enzyme catalyses scyllo-inosose = 3D-3,5/4-trihydroxycyclohexane-1,2-dione + H2O. The protein operates within polyol metabolism; myo-inositol degradation into acetyl-CoA; acetyl-CoA from myo-inositol: step 2/7. Functionally, catalyzes the dehydration of inosose (2-keto-myo-inositol, 2KMI or 2,4,6/3,5-pentahydroxycyclohexanone) to 3D-(3,5/4)-trihydroxycyclohexane-1,2-dione (D-2,3-diketo-4-deoxy-epi-inositol). The chain is Inosose dehydratase from Lactiplantibacillus plantarum (strain ATCC BAA-793 / NCIMB 8826 / WCFS1) (Lactobacillus plantarum).